The following is a 269-amino-acid chain: 5'-nucleotidase SurE (269 aa).

Aspartate 11, aspartate 12, serine 43, and asparagine 101 together coordinate a divalent metal cation.

The protein belongs to the SurE nucleotidase family. A divalent metal cation serves as cofactor.

It localises to the cytoplasm. It catalyses the reaction a ribonucleoside 5'-phosphate + H2O = a ribonucleoside + phosphate. Functionally, nucleotidase that shows phosphatase activity on nucleoside 5'-monophosphates. The sequence is that of 5'-nucleotidase SurE from Prochlorococcus marinus (strain MIT 9211).